The chain runs to 362 residues: MTAEGSGSSTAAVASHDPSHTRPSRREAPDRNLAMELVRVTEAGAMAAGRWVGRGDKEGGDGAAVDAMRELVNSVSMRGVVVIGEGEKDHAPMLYNGEEVGNGDGPECDFAVDPIDGTTLMSKGMTNAISVLAVADRGTMFDPSAVFYMNKIAVGPDAAHVLDITAPISENIRAVAKVKDLSVRDMTVCILDRPRHAQLIHDVRATGARIRLITDGDVAGAISACRPHSGTDLLAGIGGTPEGIIAAAAIRCMGGAIQAQLAPRDDAERRKALEAGYDLNQVLTTEDLVSGENVFFCATGVTDGDLLKGVRYYPGGCTTHSIVMRSKSGTVRMIEAYHRLSKLNEYSAIDFTGDSSAVYPLP.

The span at 1–12 (MTAEGSGSSTAA) shows a compositional bias: polar residues. The segment at 1–32 (MTAEGSGSSTAAVASHDPSHTRPSRREAPDRN) is disordered. Over residues 17-30 (DPSHTRPSRREAPD) the composition is skewed to basic and acidic residues. Mn(2+)-binding residues include D61, E85, D113, and D116. Residues 116-118 (DGT), Y148, 193-195 (RPR), 215-217 (DGD), and G239 each bind substrate. E242 contributes to the Mn(2+) binding site.

This sequence belongs to the FBPase class 2 family. It depends on Mn(2+) as a cofactor.

It is found in the cytoplasm. It carries out the reaction beta-D-fructose 1,6-bisphosphate + H2O = beta-D-fructose 6-phosphate + phosphate. It functions in the pathway carbohydrate biosynthesis; gluconeogenesis. In terms of biological role, catalyzes the hydrolysis of fructose 1,6-bisphosphate to fructose 6-phosphate. This chain is Fructose-1,6-bisphosphatase class 2 (glpX), found in Mycobacterium bovis (strain BCG / Tokyo 172 / ATCC 35737 / TMC 1019).